The chain runs to 243 residues: MSDVTLLRIGIAIVGILFVAAVFFFSTPKTSAHRVRTKKEEPPRERREPMLSTEADNSPPQGVDEVPASVSQQQVNPEANKPGEVQLGKRPTNHFDKIILLFVAAKAEHTLRGEDIVVAAEKTGMIFGYMNVFHRLVEGYPEHGPIFSMASILKPGSFDMANIREMQIPAISFFLTLPAPMTALDAWEKMLPTVQRMAELLDGVVLDESRNALGRQRIAHIRDELRAYDRQQQVPPLIKNSRW.

Residues 1 to 4 lie on the Periplasmic side of the membrane; the sequence is MSDV. The chain crosses the membrane as a helical span at residues 5 to 25; sequence TLLRIGIAIVGILFVAAVFFF. Topologically, residues 26–243 are cytoplasmic; that stretch reads STPKTSAHRV…VPPLIKNSRW (218 aa). Residues 32–89 form a disordered region; it reads AHRVRTKKEEPPRERREPMLSTEADNSPPQGVDEVPASVSQQQVNPEANKPGEVQLGK. Over residues 38-49 the composition is skewed to basic and acidic residues; the sequence is KKEEPPRERREP.

This sequence belongs to the ZipA family. As to quaternary structure, interacts with FtsZ via their C-terminal domains.

The protein localises to the cell inner membrane. Functionally, essential cell division protein that stabilizes the FtsZ protofilaments by cross-linking them and that serves as a cytoplasmic membrane anchor for the Z ring. Also required for the recruitment to the septal ring of downstream cell division proteins. The chain is Cell division protein ZipA from Xylella fastidiosa (strain 9a5c).